The primary structure comprises 885 residues: Aconitate hydratase A (885 aa).

Residues Cys425, Cys491, and Cys494 each coordinate [4Fe-4S] cluster.

This sequence belongs to the aconitase/IPM isomerase family. In terms of assembly, monomer. It depends on [4Fe-4S] cluster as a cofactor.

The catalysed reaction is citrate = D-threo-isocitrate. It carries out the reaction (2S,3R)-3-hydroxybutane-1,2,3-tricarboxylate = 2-methyl-cis-aconitate + H2O. It participates in carbohydrate metabolism; tricarboxylic acid cycle; isocitrate from oxaloacetate: step 2/2. The protein operates within organic acid metabolism; propanoate degradation. Involved in the catabolism of short chain fatty acids (SCFA) via the tricarboxylic acid (TCA)(acetyl degradation route) and probably the 2-methylcitrate cycle I (propionate degradation route). Catalyzes the reversible isomerization of citrate to isocitrate via cis-aconitate. Could catalyze the hydration of 2-methyl-cis-aconitate to yield (2R,3S)-2-methylisocitrate. The apo form of AcnA functions as a RNA-binding regulatory protein. This chain is Aconitate hydratase A (acnA), found in Rickettsia bellii (strain RML369-C).